Consider the following 409-residue polypeptide: Peptidase T (409 aa).

H78 serves as a coordination point for Zn(2+). Residue D80 is part of the active site. D141 lines the Zn(2+) pocket. E175 functions as the Proton acceptor in the catalytic mechanism. Zn(2+) is bound by residues E176, D198, and H380.

The protein belongs to the peptidase M20B family. Zn(2+) is required as a cofactor.

The protein resides in the cytoplasm. The enzyme catalyses Release of the N-terminal residue from a tripeptide.. Functionally, cleaves the N-terminal amino acid of tripeptides. The sequence is that of Peptidase T from Caldanaerobacter subterraneus subsp. tengcongensis (strain DSM 15242 / JCM 11007 / NBRC 100824 / MB4) (Thermoanaerobacter tengcongensis).